The chain runs to 269 residues: Formamidopyrimidine-DNA glycosylase (269 aa).

Proline 2 serves as the catalytic Schiff-base intermediate with DNA. Glutamate 3 functions as the Proton donor in the catalytic mechanism. Catalysis depends on lysine 57, which acts as the Proton donor; for beta-elimination activity. The DNA site is built by histidine 90, arginine 109, and lysine 150. Residues 235–269 (QVYGRKGEPCRVCGTPIVATKHAQRATFYCRQCQK) form an FPG-type zinc finger. Arginine 259 functions as the Proton donor; for delta-elimination activity in the catalytic mechanism.

This sequence belongs to the FPG family. As to quaternary structure, monomer. Requires Zn(2+) as cofactor.

The catalysed reaction is Hydrolysis of DNA containing ring-opened 7-methylguanine residues, releasing 2,6-diamino-4-hydroxy-5-(N-methyl)formamidopyrimidine.. The enzyme catalyses 2'-deoxyribonucleotide-(2'-deoxyribose 5'-phosphate)-2'-deoxyribonucleotide-DNA = a 3'-end 2'-deoxyribonucleotide-(2,3-dehydro-2,3-deoxyribose 5'-phosphate)-DNA + a 5'-end 5'-phospho-2'-deoxyribonucleoside-DNA + H(+). In terms of biological role, involved in base excision repair of DNA damaged by oxidation or by mutagenic agents. Acts as a DNA glycosylase that recognizes and removes damaged bases. Has a preference for oxidized purines, such as 7,8-dihydro-8-oxoguanine (8-oxoG). Has AP (apurinic/apyrimidinic) lyase activity and introduces nicks in the DNA strand. Cleaves the DNA backbone by beta-delta elimination to generate a single-strand break at the site of the removed base with both 3'- and 5'-phosphates. This Escherichia coli (strain K12 / MC4100 / BW2952) protein is Formamidopyrimidine-DNA glycosylase.